A 333-amino-acid polypeptide reads, in one-letter code: Ketol-acid reductoisomerase (NADP(+)) (333 aa).

In terms of domain architecture, KARI N-terminal Rossmann spans 6-186; the sequence is TRVYTECDAD…GALRAGAIQT (181 aa). NADP(+)-binding positions include 29–32, K52, S55, S57, and 87–90; these read YGSQ and DPAQ. Residue H112 is part of the active site. Residue G138 coordinates NADP(+). The region spanning 187-332 is the KARI C-terminal knotted domain; the sequence is TFTEETETDL…ARLRALFSWS (146 aa). D195, E199, E231, and E235 together coordinate Mg(2+). S256 is a binding site for substrate.

This sequence belongs to the ketol-acid reductoisomerase family. Mg(2+) is required as a cofactor.

It carries out the reaction (2R)-2,3-dihydroxy-3-methylbutanoate + NADP(+) = (2S)-2-acetolactate + NADPH + H(+). It catalyses the reaction (2R,3R)-2,3-dihydroxy-3-methylpentanoate + NADP(+) = (S)-2-ethyl-2-hydroxy-3-oxobutanoate + NADPH + H(+). It participates in amino-acid biosynthesis; L-isoleucine biosynthesis; L-isoleucine from 2-oxobutanoate: step 2/4. Its pathway is amino-acid biosynthesis; L-valine biosynthesis; L-valine from pyruvate: step 2/4. Involved in the biosynthesis of branched-chain amino acids (BCAA). Catalyzes an alkyl-migration followed by a ketol-acid reduction of (S)-2-acetolactate (S2AL) to yield (R)-2,3-dihydroxy-isovalerate. In the isomerase reaction, S2AL is rearranged via a Mg-dependent methyl migration to produce 3-hydroxy-3-methyl-2-ketobutyrate (HMKB). In the reductase reaction, this 2-ketoacid undergoes a metal-dependent reduction by NADPH to yield (R)-2,3-dihydroxy-isovalerate. The chain is Ketol-acid reductoisomerase (NADP(+)) from Tropheryma whipplei (strain Twist) (Whipple's bacillus).